A 370-amino-acid chain; its full sequence is Glycerophosphodiester phosphodiesterase GDPD3 (370 aa).

A GP-PDE domain is found at 35-322 (FVLMGHRGFG…DMVKDISEAI (288 aa)).

The protein belongs to the glycerophosphoryl diester phosphodiesterase family. As to expression, expressed in flowers and siliques.

It carries out the reaction a sn-glycero-3-phosphodiester + H2O = an alcohol + sn-glycerol 3-phosphate + H(+). The polypeptide is Glycerophosphodiester phosphodiesterase GDPD3 (Arabidopsis thaliana (Mouse-ear cress)).